A 484-amino-acid polypeptide reads, in one-letter code: Protein nucleotidyltransferase YdiU (484 aa).

ATP contacts are provided by G81, G83, R84, K103, D115, G116, R166, and R173. The active-site Proton acceptor is the D244. Positions 245 and 254 each coordinate Mg(2+). D254 is an ATP binding site.

Belongs to the SELO family. Requires Mg(2+) as cofactor. It depends on Mn(2+) as a cofactor.

It carries out the reaction L-seryl-[protein] + ATP = 3-O-(5'-adenylyl)-L-seryl-[protein] + diphosphate. The enzyme catalyses L-threonyl-[protein] + ATP = 3-O-(5'-adenylyl)-L-threonyl-[protein] + diphosphate. The catalysed reaction is L-tyrosyl-[protein] + ATP = O-(5'-adenylyl)-L-tyrosyl-[protein] + diphosphate. It catalyses the reaction L-histidyl-[protein] + UTP = N(tele)-(5'-uridylyl)-L-histidyl-[protein] + diphosphate. It carries out the reaction L-seryl-[protein] + UTP = O-(5'-uridylyl)-L-seryl-[protein] + diphosphate. The enzyme catalyses L-tyrosyl-[protein] + UTP = O-(5'-uridylyl)-L-tyrosyl-[protein] + diphosphate. Nucleotidyltransferase involved in the post-translational modification of proteins. It can catalyze the addition of adenosine monophosphate (AMP) or uridine monophosphate (UMP) to a protein, resulting in modifications known as AMPylation and UMPylation. This Shewanella oneidensis (strain ATCC 700550 / JCM 31522 / CIP 106686 / LMG 19005 / NCIMB 14063 / MR-1) protein is Protein nucleotidyltransferase YdiU.